A 648-amino-acid polypeptide reads, in one-letter code: Probable alpha-galactosidase D (648 aa).

Positions 1 to 17 (MESIVWLLLLSPALVAG) are cleaved as a signal peptide. N-linked (GlcNAc...) asparagine glycans are attached at residues N84 and N90. An intrachain disulfide couples C123 to C156. The Nucleophile role is filled by D154. 199–203 (EWGID) lines the substrate pocket. Residue D221 is the Proton donor of the active site. N-linked (GlcNAc...) asparagine glycans are attached at residues N339, N505, and N572.

The protein belongs to the glycosyl hydrolase 27 family.

It localises to the secreted. The catalysed reaction is Hydrolysis of terminal, non-reducing alpha-D-galactose residues in alpha-D-galactosides, including galactose oligosaccharides, galactomannans and galactolipids.. Hydrolyzes a variety of simple alpha-D-galactoside as well as more complex molecules such as oligosaccharides and polysaccharides. This Neosartorya fischeri (strain ATCC 1020 / DSM 3700 / CBS 544.65 / FGSC A1164 / JCM 1740 / NRRL 181 / WB 181) (Aspergillus fischerianus) protein is Probable alpha-galactosidase D (aglD).